Consider the following 410-residue polypeptide: Arginine deiminase (410 aa).

Cys399 functions as the Amidino-cysteine intermediate in the catalytic mechanism.

It belongs to the arginine deiminase family.

Its subcellular location is the cytoplasm. The catalysed reaction is L-arginine + H2O = L-citrulline + NH4(+). Its pathway is amino-acid degradation; L-arginine degradation via ADI pathway; carbamoyl phosphate from L-arginine: step 1/2. This chain is Arginine deiminase, found in Listeria monocytogenes serotype 4a (strain HCC23).